Reading from the N-terminus, the 390-residue chain is Peroxisomal sarcosine oxidase (390 aa).

An FAD-binding site is contributed by 9–39; the sequence is DAIVIGAGIQGCFTAYHLAKHSKSVLLLEQF. An N6-acetyllysine mark is found at Lys-126 and Lys-287. An S-8alpha-FAD cysteine modification is found at Cys-319. The Microbody targeting signal signature appears at 388 to 390; it reads AHL.

It belongs to the MSOX/MTOX family. FAD serves as cofactor. Kidney and liver.

It localises to the peroxisome. It carries out the reaction sarcosine + O2 + H2O = formaldehyde + glycine + H2O2. It catalyses the reaction L-pipecolate + O2 = L-1-piperideine-6-carboxylate + H2O2 + H(+). Metabolizes sarcosine, L-pipecolic acid and L-proline. The protein is Peroxisomal sarcosine oxidase (Pipox) of Mus musculus (Mouse).